We begin with the raw amino-acid sequence, 325 residues long: GMP reductase (325 aa).

C174 serves as the catalytic Thioimidate intermediate. Position 203–226 (203–226 (LIADGGIRTHGDIAKSIRFGASMV)) interacts with NADP(+).

It belongs to the IMPDH/GMPR family. GuaC type 2 subfamily.

It catalyses the reaction IMP + NH4(+) + NADP(+) = GMP + NADPH + 2 H(+). Catalyzes the irreversible NADPH-dependent deamination of GMP to IMP. It functions in the conversion of nucleobase, nucleoside and nucleotide derivatives of G to A nucleotides, and in maintaining the intracellular balance of A and G nucleotides. The polypeptide is GMP reductase (Staphylococcus aureus (strain JH9)).